Consider the following 674-residue polypeptide: Inactivation-no-after-potential D protein (674 aa).

A PDZ 1 domain is found at 17-106 (MVTLDKTGKK…KIELEIQTFD (90 aa)). The interval 133–192 (QTTNNNASGGQGMGQGQGQGQGMAGMNRQQSMQKRNTTFTASMRQKHSNYADEDDEDTRD) is disordered. The segment covering 141–155 (GGQGMGQGQGQGQGM) has biased composition (gly residues). Over residues 159–175 (NRQQSMQKRNTTFTASM) the composition is skewed to polar residues. 2 PDZ domains span residues 249 to 332 (RIEV…TSRR) and 364 to 448 (ARTV…LTLK). Residues 458 to 475 (AAEEKKKEEAKKEEEKPQ) show a composition bias toward basic and acidic residues. Residues 458-481 (AAEEKKKEEAKKEEEKPQEPATAE) form a disordered region. PDZ domains lie at 489–577 (LIEL…RADP) and 584–664 (NVDL…TRPK). Residues S598 and S600 each carry the phosphoserine modification.

Interacts with the C-terminus of trp, and with norpA and inaC to form the inaD signaling complex. Interacts with Fkbp59, which together with trpl, rhodopsin and calmodulin may also be part of the inaD complex. Post-translationally, phosphorylated by inaC. As to expression, expressed in photoreceptor cells (R cells) of the compound eyes and ocelli.

The protein resides in the cell projection. The protein localises to the rhabdomere. Functionally, involved in the negative feedback regulation of the light-activated signaling cascade in photoreceptors through a calcium-mediated process. Interacts with tetrapeptide ligand located in C-terminal sequence of 3 key components of the visual cascade, tethering them and forming a macromolecular signaling phototransduction complex. The sequence is that of Inactivation-no-after-potential D protein (inaD) from Drosophila melanogaster (Fruit fly).